Consider the following 994-residue polypeptide: Glutamate [NMDA] receptor subunit 1 (994 aa).

The first 23 residues, 1-23, serve as a signal peptide directing secretion; the sequence is MAADGFVYRWLLFGTTIVLLAEA. At 24-570 the chain is on the extracellular side; the sequence is AQRHTASDNP…TLVSFLQPFS (547 aa). N-linked (GlcNAc...) asparagine glycosylation is found at asparagine 255, asparagine 311, asparagine 342, asparagine 394, asparagine 451, asparagine 478, and asparagine 498. Residues 527–529 and arginine 534 each bind glycine; that span reads PLT. The helical transmembrane segment at 571 to 591 threads the bilayer; sequence NTLWILVMVSVHVVALVLYLL. Over 592–648 the chain is Cytoplasmic; sequence DRFSPFGRFKLSHSDSNEEKALNLSSAVWFAWGVLLNSGIGEGTPRSFSARVLGMVW. Residues 649-669 traverse the membrane as a helical segment; the sequence is AGFAMIIVASYTANLAAFLVL. The Extracellular segment spans residues 670-828; sequence ERPKTKLSGI…KTPNTLGLKN (159 aa). Residue asparagine 690 is glycosylated (N-linked (GlcNAc...) asparagine). Glycine contacts are provided by serine 700 and aspartate 744. Residues 829–849 form a helical membrane-spanning segment; the sequence is MAGVFILVGVGIAGGVGLIII. The Cytoplasmic segment spans residues 850–994; that stretch reads EVIYKKHQVK…YTSDVSHLVV (145 aa). The tract at residues 971–994 is disordered; that stretch reads RPQQNMLPPRYSPGYTSDVSHLVV. Polar residues predominate over residues 984-994; the sequence is GYTSDVSHLVV.

It belongs to the glutamate-gated ion channel (TC 1.A.10.1) family. Forms a heteromeric NMDA channel with Nmdar2.

The protein resides in the cell membrane. It is found in the postsynaptic cell membrane. It localises to the postsynaptic density. Its function is as follows. NMDA receptor subtype of glutamate-gated ion channels with high calcium permeability and voltage-dependent sensitivity to magnesium. Mediated by glycine. This protein plays a key role in synaptic plasticity, synaptogenesis, excitotoxicity, memory acquisition and learning. It mediates neuronal functions in glutamate neurotransmission. Is involved in the cell surface targeting of NMDA receptors. Plays a role in associative learning and in long-term memory consolidation. The polypeptide is Glutamate [NMDA] receptor subunit 1 (Drosophila ananassae (Fruit fly)).